The primary structure comprises 328 residues: Phosphate acyltransferase (328 aa).

The protein belongs to the PlsX family. Homodimer. Probably interacts with PlsY.

Its subcellular location is the cytoplasm. It catalyses the reaction a fatty acyl-[ACP] + phosphate = an acyl phosphate + holo-[ACP]. It functions in the pathway lipid metabolism; phospholipid metabolism. In terms of biological role, catalyzes the reversible formation of acyl-phosphate (acyl-PO(4)) from acyl-[acyl-carrier-protein] (acyl-ACP). This enzyme utilizes acyl-ACP as fatty acyl donor, but not acyl-CoA. This chain is Phosphate acyltransferase, found in Mycoplasma genitalium (strain ATCC 33530 / DSM 19775 / NCTC 10195 / G37) (Mycoplasmoides genitalium).